The sequence spans 131 residues: Glycine cleavage system H protein (131 aa).

The Lipoyl-binding domain occupies 24-106 (TVRVGITDYA…YGEGWLVDLR (83 aa)). Lys-65 carries the post-translational modification N6-lipoyllysine.

The protein belongs to the GcvH family. The glycine cleavage system is composed of four proteins: P, T, L and H. (R)-lipoate is required as a cofactor.

In terms of biological role, the glycine cleavage system catalyzes the degradation of glycine. The H protein shuttles the methylamine group of glycine from the P protein to the T protein. This Mycolicibacterium smegmatis (strain ATCC 700084 / mc(2)155) (Mycobacterium smegmatis) protein is Glycine cleavage system H protein.